The sequence spans 166 residues: Orotate phosphoribosyltransferase (166 aa).

5-phospho-alpha-D-ribose 1-diphosphate is bound by residues Arg83, Lys84, Arg86, His88, and 108 to 116; that span reads EDVVTTGNS. 2 residues coordinate orotate: Thr112 and Arg140.

Belongs to the purine/pyrimidine phosphoribosyltransferase family. PyrE subfamily. Homodimer. Mg(2+) serves as cofactor.

It carries out the reaction orotidine 5'-phosphate + diphosphate = orotate + 5-phospho-alpha-D-ribose 1-diphosphate. The protein operates within pyrimidine metabolism; UMP biosynthesis via de novo pathway; UMP from orotate: step 1/2. Its function is as follows. Catalyzes the transfer of a ribosyl phosphate group from 5-phosphoribose 1-diphosphate to orotate, leading to the formation of orotidine monophosphate (OMP). In Thermoplasma volcanium (strain ATCC 51530 / DSM 4299 / JCM 9571 / NBRC 15438 / GSS1), this protein is Orotate phosphoribosyltransferase.